The following is a 428-amino-acid chain: UPF0229 protein YeaH (428 aa).

A compositionally biased stretch (basic and acidic residues) spans 78–90; that stretch reads GNDHFIQNDRIER. The disordered stretch occupies residues 78–111; that stretch reads GNDHFIQNDRIERPQGGGGGGSGSGQGQASQDGE. The span at 92 to 103 shows a compositional bias: gly residues; sequence QGGGGGGSGSGQ.

It belongs to the UPF0229 family.

This chain is UPF0229 protein YeaH, found in Salmonella choleraesuis (strain SC-B67).